We begin with the raw amino-acid sequence, 259 residues long: Methanethiol S-methyltransferase 2 (259 aa).

Helical transmembrane passes span 5–25, 46–66, 88–108, 115–135, and 182–202; these read LAIL…FLYA, LGEA…QHSV, TYVL…RPIP, SGIA…IAFA, and FLLA…FALA.

Belongs to the nurim family.

The protein resides in the membrane. The catalysed reaction is methanethiol + S-adenosyl-L-methionine = dimethyl sulfide + S-adenosyl-L-homocysteine + H(+). Its function is as follows. Catalyzes the methylation of methanethiol (MeSH) to yield dimethylsulphide (DMS). In Bradyrhizobium diazoefficiens (strain JCM 10833 / BCRC 13528 / IAM 13628 / NBRC 14792 / USDA 110), this protein is Methanethiol S-methyltransferase 2.